The chain runs to 107 residues: uncharacterized protein (107 aa).

4 helical membrane passes run 9-28, 33-50, 55-72, and 77-99; these read FLVF…LIME, SYII…SLNI, LAIA…AIHV, and YRVI…YLKG.

The protein localises to the cell membrane. This is an uncharacterized protein from Archaeoglobus fulgidus (strain ATCC 49558 / DSM 4304 / JCM 9628 / NBRC 100126 / VC-16).